We begin with the raw amino-acid sequence, 411 residues long: MPSVLWILFDGGGDRPNGGKTPFHVAFKPTIDYLTSLGSCGLLDPISPGVRPGSDTAHLALFGYDPYKYYTGRGAFEALGAGIELRPGDVAFRTNLATVDSSGVVIDRRAGRYIAPEETRAVEEVMAKIGDEVAKRYGVEVVYKSTVEHRGVLVLRGPVSHKVSDTDPHKVGMPVAKAAPLGNDREAALTAEVVNYITARFTEAAGGLEINKARAASGRPPINAILLRGGGYMPAIEPVAEKYRVKAAAIAGVALIRGVAKAVGMDVYTAQGLGGTKDDVFDHAVKLAVELMGKYDVVFLHVKGTDSTSHDGDFQGKVAVIERLDKALAPYLDHLLKNYFIVTSDHATPVSIREHTGEPVPLTLYGPDVVPDDVAKFSELTCWRGALGRLRGIDIMPILASYLGLSEKFGE.

Belongs to the BPG-independent phosphoglycerate mutase family. A-PGAM subfamily.

It catalyses the reaction (2R)-2-phosphoglycerate = (2R)-3-phosphoglycerate. The protein operates within carbohydrate degradation; glycolysis; pyruvate from D-glyceraldehyde 3-phosphate: step 3/5. Functionally, catalyzes the interconversion of 2-phosphoglycerate and 3-phosphoglycerate. The protein is 2,3-bisphosphoglycerate-independent phosphoglycerate mutase of Pyrobaculum calidifontis (strain DSM 21063 / JCM 11548 / VA1).